Here is a 20-residue protein sequence, read N- to C-terminus: Lysozyme (20 aa).

Monomer.

The protein resides in the secreted. It catalyses the reaction Hydrolysis of (1-&gt;4)-beta-linkages between N-acetylmuramic acid and N-acetyl-D-glucosamine residues in a peptidoglycan and between N-acetyl-D-glucosamine residues in chitodextrins.. Has bacteriolytic activity. This is Lysozyme from Lysobacter sp. (strain XL1).